The chain runs to 50 residues: Parvalbumin (50 aa).

The region spanning 38–50 (KTHEQVKKVFNIL) is the EF-hand domain.

The protein belongs to the parvalbumin family.

In terms of biological role, probably regulates the activity of the caudal neurosecretory system. Binds two calcium ions. The polypeptide is Parvalbumin (Scyliorhinus canicula (Small-spotted catshark)).